A 129-amino-acid polypeptide reads, in one-letter code: Small ribosomal subunit protein uS11 (129 aa).

The protein belongs to the universal ribosomal protein uS11 family. In terms of assembly, part of the 30S ribosomal subunit. Interacts with proteins S7 and S18. Binds to IF-3.

Functionally, located on the platform of the 30S subunit, it bridges several disparate RNA helices of the 16S rRNA. Forms part of the Shine-Dalgarno cleft in the 70S ribosome. This is Small ribosomal subunit protein uS11 from Geobacillus sp. (strain WCH70).